A 220-amino-acid chain; its full sequence is 7-carboxy-7-deazaguanine synthase (220 aa).

Substrate contacts are provided by residues 16-18 (IQG) and Arg31. Positions 22-215 (FAGWPCAFVR…LQLHKYIWNP (194 aa)) constitute a Radical SAM core domain. Residues Cys35, Cys39, and Cys42 each coordinate [4Fe-4S] cluster. Thr44 lines the Mg(2+) pocket. A substrate-binding site is contributed by Thr74. Residue Gly76 participates in S-adenosyl-L-methionine binding.

Belongs to the radical SAM superfamily. 7-carboxy-7-deazaguanine synthase family. As to quaternary structure, homodimer. [4Fe-4S] cluster is required as a cofactor. The cofactor is S-adenosyl-L-methionine. It depends on Mg(2+) as a cofactor.

The enzyme catalyses 6-carboxy-5,6,7,8-tetrahydropterin + H(+) = 7-carboxy-7-deazaguanine + NH4(+). Its pathway is purine metabolism; 7-cyano-7-deazaguanine biosynthesis. In terms of biological role, catalyzes the complex heterocyclic radical-mediated conversion of 6-carboxy-5,6,7,8-tetrahydropterin (CPH4) to 7-carboxy-7-deazaguanine (CDG), a step common to the biosynthetic pathways of all 7-deazapurine-containing compounds. This chain is 7-carboxy-7-deazaguanine synthase, found in Chlorobaculum tepidum (strain ATCC 49652 / DSM 12025 / NBRC 103806 / TLS) (Chlorobium tepidum).